Reading from the N-terminus, the 153-residue chain is Pheromone-binding protein Gp-9 (153 aa).

A signal peptide spans 1–19; it reads MKTFVLHIFIFALVAFASA. Intrachain disulfides connect Cys-37–Cys-77, Cys-73–Cys-129, and Cys-118–Cys-138.

Belongs to the PBP/GOBP family. In terms of assembly, homodimer.

The protein resides in the secreted. Its function is as follows. Colony queen number, a major feature of social organization, is associated with worker genotype for Gp-9. Colonies are headed by either a single reproductive queen (monogyne form) or multiple queens (polygyne form). Differences in worker Gp-9 genotypes between social forms may cause differences in workers' abilities to recognize queens and regulate their numbers. The sequence is that of Pheromone-binding protein Gp-9 from Solenopsis daguerrei (Workerless parasitic ant).